Here is a 297-residue protein sequence, read N- to C-terminus: Pantothenate synthetase (297 aa).

An ATP-binding site is contributed by 30-37 (MGYLHAGH). H37 acts as the Proton donor in catalysis. Q61 is a (R)-pantoate binding site. Beta-alanine is bound at residue Q61. 147 to 150 (GEKD) is an ATP binding site. Residue Q153 coordinates (R)-pantoate. ATP is bound by residues V176 and 184–187 (LSSR).

It belongs to the pantothenate synthetase family. In terms of assembly, homodimer.

It localises to the cytoplasm. The catalysed reaction is (R)-pantoate + beta-alanine + ATP = (R)-pantothenate + AMP + diphosphate + H(+). Its pathway is cofactor biosynthesis; (R)-pantothenate biosynthesis; (R)-pantothenate from (R)-pantoate and beta-alanine: step 1/1. Catalyzes the condensation of pantoate with beta-alanine in an ATP-dependent reaction via a pantoyl-adenylate intermediate. The chain is Pantothenate synthetase from Rhizobium etli (strain ATCC 51251 / DSM 11541 / JCM 21823 / NBRC 15573 / CFN 42).